The chain runs to 423 residues: Histidine--tRNA ligase (423 aa).

This sequence belongs to the class-II aminoacyl-tRNA synthetase family. As to quaternary structure, homodimer.

The protein localises to the cytoplasm. It carries out the reaction tRNA(His) + L-histidine + ATP = L-histidyl-tRNA(His) + AMP + diphosphate + H(+). The protein is Histidine--tRNA ligase (hisS) of Mycobacterium bovis (strain ATCC BAA-935 / AF2122/97).